The sequence spans 549 residues: ATP synthase subunit alpha (549 aa).

ATP is bound at residue 172-179; that stretch reads GDRKTGKT.

It belongs to the ATPase alpha/beta chains family. F-type ATPases have 2 components, CF(1) - the catalytic core - and CF(0) - the membrane proton channel. CF(1) has five subunits: alpha(3), beta(3), gamma(1), delta(1), epsilon(1). CF(0) has three main subunits: a(1), b(2) and c(9-12). The alpha and beta chains form an alternating ring which encloses part of the gamma chain. CF(1) is attached to CF(0) by a central stalk formed by the gamma and epsilon chains, while a peripheral stalk is formed by the delta and b chains.

The protein localises to the cell membrane. It carries out the reaction ATP + H2O + 4 H(+)(in) = ADP + phosphate + 5 H(+)(out). Functionally, produces ATP from ADP in the presence of a proton gradient across the membrane. The alpha chain is a regulatory subunit. This chain is ATP synthase subunit alpha, found in Mycobacterium tuberculosis (strain CDC 1551 / Oshkosh).